The following is a 150-amino-acid chain: Large ribosomal subunit protein uL15 (150 aa).

The interval 1-52 (MDLSNLKPAEGSVRKNSKRIGRGEGSGKGGTATRGHKGAKSRSGYSKKIGFE) is disordered. The segment covering 23 to 32 (GEGSGKGGTA) has biased composition (gly residues).

This sequence belongs to the universal ribosomal protein uL15 family. In terms of assembly, part of the 50S ribosomal subunit.

Functionally, binds to the 23S rRNA. This Christiangramia forsetii (strain DSM 17595 / CGMCC 1.15422 / KT0803) (Gramella forsetii) protein is Large ribosomal subunit protein uL15.